The sequence spans 265 residues: Speedy protein E12 (265 aa).

The disordered stretch occupies residues 1-80 (MGQILGKIMM…EPEKELAPEP (80 aa)). Over residues 13 to 23 (QPQPQEEQSPQ) the composition is skewed to low complexity. A compositionally biased stretch (acidic residues) spans 66–80 (DESDDEPEKELAPEP).

Belongs to the Speedy/Ringo family.

In Homo sapiens (Human), this protein is Speedy protein E12.